The primary structure comprises 463 residues: Lariat debranching enzyme (463 aa).

A divalent metal cation is bound by residues cysteine 8, histidine 10, aspartate 33, and asparagine 78. The lariat recognition loop stretch occupies residues 118-148 (SGIYSAMDYKKGRYEGLPYNYKMLKSIYHTR). Residues histidine 168, histidine 220, and histidine 222 each contribute to the a divalent metal cation site. The interval 250–324 (SGFSMKGLNE…QVTKFLALDK (75 aa)) is disordered. Residues 256–267 (GLNEPSQERLPV) are compositionally biased toward polar residues. 2 stretches are compositionally biased toward basic and acidic residues: residues 276-289 (DEEG…EKQD) and 299-323 (CRKE…LALD).

It belongs to the lariat debranching enzyme family. Requires Fe(2+) as cofactor. Zn(2+) serves as cofactor. The cofactor is Mn(2+).

It localises to the nucleus. The protein localises to the cytoplasm. With respect to regulation, active in presence of diverse metals including Fe(2+), Zn(2+) and Mn(2+). Binds two metal cations in two adjacent alpha and beta metal-binding pockets. Its function is as follows. Cleaves the 2'-5' phosphodiester linkage at the branch point of lariat intron pre-mRNAs after splicing and converts them into linear molecules that are subsequently degraded, thereby facilitating ribonucleotide turnover. This is Lariat debranching enzyme (dbr1) from Schizosaccharomyces pombe (strain 972 / ATCC 24843) (Fission yeast).